Consider the following 103-residue polypeptide: 6-pyruvoyl tetrahydrobiopterin synthase (103 aa).

Ala-1 carries the post-translational modification N-acetylalanine. His-27 provides a ligand contact to Zn(2+). Residues His-53 and Glu-92 each act as charge relay system in the active site.

Belongs to the PTPS family. In terms of assembly, homohexamer formed of two homotrimers in a head to head fashion. It depends on Zn(2+) as a cofactor.

The catalysed reaction is 7,8-dihydroneopterin 3'-triphosphate = 6-pyruvoyl-5,6,7,8-tetrahydropterin + triphosphate + H(+). Its pathway is cofactor biosynthesis; tetrahydrobiopterin biosynthesis; tetrahydrobiopterin from 7,8-dihydroneopterin triphosphate: step 1/3. Functionally, involved in the biosynthesis of tetrahydrobiopterin, an essential cofactor of aromatic amino acid hydroxylases. Catalyzes the transformation of 7,8-dihydroneopterin triphosphate into 6-pyruvoyl tetrahydropterin. The protein is 6-pyruvoyl tetrahydrobiopterin synthase (pts) of Salmo salar (Atlantic salmon).